The chain runs to 180 residues: Small ribosomal subunit protein eS10y (180 aa).

The tract at residues 92–180 is disordered; that stretch reads LKKQQKPLGR…GGGAAGSDLP (89 aa). The segment covering 108–128 has biased composition (basic and acidic residues); it reads DRPRGPPRGDGERRFGDRDGY. Gly residues predominate over residues 152-180; the sequence is FRGGAGGARQGFGRGAGGFGGGAAGSDLP.

This sequence belongs to the eukaryotic ribosomal protein eS10 family.

Its subcellular location is the cytoplasm. The sequence is that of Small ribosomal subunit protein eS10y (RPS10B) from Arabidopsis thaliana (Mouse-ear cress).